The following is a 2202-amino-acid chain: Nonribosomal peptide synthetase 5 (2202 aa).

An adenylation 1 region spans residues 58–443; it reads TYAQLDALSD…LLSYDKVDSA (386 aa). The region spanning 517-593 is the Carrier 1 domain; that stretch reads ERGLGAVESV…NIAAAVVELS (77 aa). An O-(pantetheine 4'-phosphoryl)serine modification is found at Ser554. The condensation 1 stretch occupies residues 625-918; that stretch reads IAPMTDMQTR…INTLPLAINT (294 aa). An adenylation 2 region spans residues 1105 to 1482; the sequence is TYREFGRMTE…EVQSTISKLA (378 aa). Residues 1563–1643 enclose the Carrier 2 domain; the sequence is DLETDTQRVL…DLSLAIDELV (81 aa). Ser1602 bears the O-(pantetheine 4'-phosphoryl)serine mark. The tract at residues 1664–1952 is condensation 2; the sequence is GQLPLSYLEK…FLDRLLLRIQ (289 aa). The disordered stretch occupies residues 2103-2129; it reads PVGLTPSHEGSAELTNGTNKTDSTTGQ. Polar residues predominate over residues 2115 to 2129; sequence ELTNGTNKTDSTTGQ. The 73-residue stretch at 2130–2202 folds into the Carrier 3 domain; the sequence is QELENNLTDV…LELATCAVII (73 aa). Ser2164 carries the post-translational modification O-(pantetheine 4'-phosphoryl)serine.

Belongs to the NRP synthetase family.

Functionally, nonribosomal peptide synthesis (NRPS) is a key mechanism responsible for the biosynthesis of bioactive metabolites which are potentially contributing to organismal virulence. This chain is Nonribosomal peptide synthetase 5 (NRPS5), found in Aspergillus fumigatus (strain ATCC MYA-4609 / CBS 101355 / FGSC A1100 / Af293) (Neosartorya fumigata).